Consider the following 366-residue polypeptide: Isocitrate dehydrogenase [NAD] subunit alpha, mitochondrial (366 aa).

A mitochondrion-targeting transit peptide spans 1 to 27 (MAGPAWISKVSRLLGAFHNPKQVTRGF). K77 is modified (N6-succinyllysine). The residue at position 101 (T101) is a Phosphothreonine. Substrate-binding residues include R115, R125, and R146. N6-acetyllysine is present on K223. Positions 233, 257, and 261 each coordinate Mg(2+). K343 bears the N6-acetyllysine; alternate mark. The residue at position 343 (K343) is an N6-succinyllysine; alternate. An N6-succinyllysine modification is found at K350.

This sequence belongs to the isocitrate and isopropylmalate dehydrogenases family. As to quaternary structure, heterooligomer of subunits alpha (IDH3A), beta (IDH3B), and gamma (IDH3G) in the apparent ratio of 2:1:1. The heterodimer containing one IDH3A and one IDH3B subunit and the heterodimer containing one IDH3A and one IDH3G subunit assemble into a heterotetramer (which contains two subunits of IDH3A, one of IDH3B and one of IDH3G) and further into the heterooctamer. Requires Mg(2+) as cofactor. It depends on Mn(2+) as a cofactor.

The protein resides in the mitochondrion. The catalysed reaction is D-threo-isocitrate + NAD(+) = 2-oxoglutarate + CO2 + NADH. The heterotetramer and the heterodimer composed of IDH3A and IDH3G subunits can be allosterically activated by citrate (CIT) or/and ADP, and the two activators can act independently or synergistically. The heterodimer composed of IDH3A and IDH3B subunits cannot be allosterically regulated and the allosteric regulation of the heterotetramer is through the IDH3G subunit and not the IDH3B subunit. The IDH3G subunit contains the allosteric site which consists of a CIT-binding site and an ADP-binding site, and the binding of CIT and ADP causes conformational changes at the allosteric site which are transmitted to the active site in the catalytic subunit (IDH3A) through a cascade of conformational changes at the heterodimer interface, leading to stabilization of the isocitrate-binding at the active site and thus activation of the enzyme. ATP can activate the heterotetramer and the heterodimer composed of IDH3A and IDH3G subunits at low concentrations but inhibits their activities at high concentrations, whereas ATP exhibits only inhibitory effect on the heterodimer composed of IDH3A and IDH3B subunits. In terms of biological role, catalytic subunit of the enzyme which catalyzes the decarboxylation of isocitrate (ICT) into alpha-ketoglutarate. The heterodimer composed of the alpha (IDH3A) and beta (IDH3B) subunits and the heterodimer composed of the alpha (IDH3A) and gamma (IDH3G) subunits, have considerable basal activity but the full activity of the heterotetramer (containing two subunits of IDH3A, one of IDH3B and one of IDH3G) requires the assembly and cooperative function of both heterodimers. The chain is Isocitrate dehydrogenase [NAD] subunit alpha, mitochondrial from Pongo abelii (Sumatran orangutan).